The following is a 79-amino-acid chain: MSFEVFEKLEAKVQQAIDTITLLQMEIEELKEQNNALSQDVQAAAGSREALVRENEQLKEEQVVWQERLRALLGKMEEV.

Residues 4-78 are a coiled coil; the sequence is EVFEKLEAKV…LRALLGKMEE (75 aa).

Belongs to the ZapB family. In terms of assembly, homodimer. The ends of the coiled-coil dimer bind to each other, forming polymers. Interacts with FtsZ.

It localises to the cytoplasm. Non-essential, abundant cell division factor that is required for proper Z-ring formation. It is recruited early to the divisome by direct interaction with FtsZ, stimulating Z-ring assembly and thereby promoting cell division earlier in the cell cycle. Its recruitment to the Z-ring requires functional FtsA or ZipA. The protein is Cell division protein ZapB of Pectobacterium carotovorum subsp. carotovorum (strain PC1).